A 632-amino-acid polypeptide reads, in one-letter code: Palmitoyltransferase ZDHHC17 (632 aa).

Residues 1-304 are Cytoplasmic-facing; sequence MQREEGFNTK…LKADKEFRQK (304 aa). Residues 11 to 305 are necessary and sufficient for interaction with DNAJC5 and SNAP25; it reads MADGPDEYET…KADKEFRQKV (295 aa). 7 ANK repeats span residues 51–86, 89–118, 123–152, 156–185, 189–219, 224–253, and 257–286; these read THIDDYSTWDIVKATQYGIYERCRELVEAGYDVRQP, ENVTLLHWAAINNRIDLVKYYISKGAIVDQ, LNSTPLHWATRQGHLSMVVQLMKYGADPSL, EGCSCIHLAAQFGHTSIVAYLIAKGQDVDM, NGMTPLMWAAYRTHSVDPTRLLLTFNVSVNL, HKNTALHWAVLAGNTTVISLLLEAGGNVDA, and KGESALDLAKQRKNVWMINHLQEARQAKGY. A run of 2 helical transmembrane segments spans residues 305–325 and 326–346; these read VMLGTPFLVIWLVGFIADLDI and DSWLIKGLMYGGVWATVQFLS. Residues 347 to 357 lie on the Cytoplasmic side of the membrane; it reads KSFFDHSMHSA. Residues 358–378 form a helical membrane-spanning segment; sequence LPLGIYLATKFWMYVTWFFWF. At 379–381 the chain is on the lumenal side; sequence WND. A helical transmembrane segment spans residues 382 to 402; it reads LNFLFIHLPFLANSVALFYNF. Residues 403–480 lie on the Cytoplasmic side of the membrane; it reads GKSWKSDPGI…GNCVGAGNHR (78 aa). The region spanning 437–487 is the DHHC domain; it reads IFCSTCLIRKPVRSKHCGVCNRCIAKFDHHCPWVGNCVGAGNHRYFMGYLF. Residue C467 is the S-palmitoyl cysteine intermediate of the active site. The chain crosses the membrane as a helical span at residues 481–501; the sequence is YFMGYLFFLLFMICWMIYGCV. Residues 502 to 529 lie on the Lumenal side of the membrane; it reads SYWGLHCETTYTKDGFWTYITQIATCSP. Residues 530–550 traverse the membrane as a helical segment; that stretch reads WMFWMFLNSVFHFLWVAVLLM. At 551 to 632 the chain is on the cytoplasmic side; it reads CQLYQITCLG…QISGSGYQLV (82 aa).

The protein belongs to the DHHC palmitoyltransferase family. AKR/ZDHHC17 subfamily. As to quaternary structure, interacts (via ANK repeats) with numerous proteins (via the consensus sequence motif [VIAP]-[VIT]-x-x-Q-P). Interacts (via ANK repeats) with CLIP3. Interacts (via ANK repeats) with HTT. Interacts (via ANK repeats) with DNAJC5 (via C-terminus). Interacts (via ANK repeats) with MAP6. Interacts (via ANK repeats) with SNAP23. Interacts (via ANK repeats) with SNAP25. Interacts (via ANK repeats) with EVL. Interacts with SPRED1 and SPRED3. Interacts with GPM6A and OPTN. May interact (via ANK repeats) with SPRED2. May interact with NTRK1; may regulate its localization and function. Post-translationally, autopalmitoylated. Autopalmitoylation has a regulatory role in ZDHHC17-mediated Mg(2+) transport. As to expression, expressed in liver, testis, kidney, heart, pancreas and brain. Highest expression was seen in the brain. Localized predominantly in the perinuclear regions of neurons from the cortex, striatum and hippocampus. Colocalized with HTT in the medium spiny neurons of the striatum and the spiny neurons that project into the globus pallidus.

The protein resides in the golgi apparatus membrane. Its subcellular location is the cytoplasmic vesicle membrane. It is found in the presynaptic cell membrane. The catalysed reaction is L-cysteinyl-[protein] + hexadecanoyl-CoA = S-hexadecanoyl-L-cysteinyl-[protein] + CoA. The enzyme catalyses L-cysteinyl-[protein] + tetradecanoyl-CoA = S-tetradecanoyl-L-cysteinyl-[protein] + CoA. It catalyses the reaction L-cysteinyl-[protein] + octadecanoyl-CoA = S-octadecanoyl-L-cysteinyl-[protein] + CoA. Functionally, palmitoyltransferase that catalyzes the addition of palmitate onto various protein substrates and is involved in a variety of cellular processes. Has no stringent fatty acid selectivity and in addition to palmitate can also transfer onto target proteins myristate from tetradecanoyl-CoA and stearate from octadecanoyl-CoA. Palmitoyltransferase specific for a subset of neuronal proteins, including SNAP25, DLG4/PSD95, GAD2, SYT1 and HTT. Also palmitoylates neuronal protein GPM6A as well as SPRED1 and SPRED3. Could also play a role in axonogenesis through the regulation of NTRK1 and the downstream ERK1/ERK2 signaling cascade. May be involved in the sorting or targeting of critical proteins involved in the initiating events of endocytosis at the plasma membrane. May play a role in Mg(2+) transport. Could also palmitoylate DNAJC5 and regulate its localization to the Golgi membrane. Palmitoylates CASP6, thereby preventing its dimerization and subsequent activation. The protein is Palmitoyltransferase ZDHHC17 of Mus musculus (Mouse).